The sequence spans 598 residues: NADH-quinone oxidoreductase subunit C/D (598 aa).

Residues 1-188 (MTDSTTHDAL…DPFVLTKQKE (188 aa)) are NADH dehydrogenase I subunit C. Residues 212-598 (DFMFLNLGPN…IDFVMSDVDR (387 aa)) form an NADH dehydrogenase I subunit D region.

It in the N-terminal section; belongs to the complex I 30 kDa subunit family. This sequence in the C-terminal section; belongs to the complex I 49 kDa subunit family. NDH-1 is composed of 13 different subunits. Subunits NuoB, CD, E, F, and G constitute the peripheral sector of the complex.

The protein resides in the cell inner membrane. The catalysed reaction is a quinone + NADH + 5 H(+)(in) = a quinol + NAD(+) + 4 H(+)(out). Its function is as follows. NDH-1 shuttles electrons from NADH, via FMN and iron-sulfur (Fe-S) centers, to quinones in the respiratory chain. The immediate electron acceptor for the enzyme in this species is believed to be ubiquinone. Couples the redox reaction to proton translocation (for every two electrons transferred, four hydrogen ions are translocated across the cytoplasmic membrane), and thus conserves the redox energy in a proton gradient. The polypeptide is NADH-quinone oxidoreductase subunit C/D (Serratia proteamaculans (strain 568)).